The chain runs to 258 residues: Acyl-[acyl-carrier-protein]--UDP-N-acetylglucosamine O-acyltransferase (258 aa).

This sequence belongs to the transferase hexapeptide repeat family. LpxA subfamily. As to quaternary structure, homotrimer.

It is found in the cytoplasm. The catalysed reaction is a (3R)-hydroxyacyl-[ACP] + UDP-N-acetyl-alpha-D-glucosamine = a UDP-3-O-[(3R)-3-hydroxyacyl]-N-acetyl-alpha-D-glucosamine + holo-[ACP]. The protein operates within glycolipid biosynthesis; lipid IV(A) biosynthesis; lipid IV(A) from (3R)-3-hydroxytetradecanoyl-[acyl-carrier-protein] and UDP-N-acetyl-alpha-D-glucosamine: step 1/6. Functionally, involved in the biosynthesis of lipid A, a phosphorylated glycolipid that anchors the lipopolysaccharide to the outer membrane of the cell. This Azotobacter vinelandii (strain DJ / ATCC BAA-1303) protein is Acyl-[acyl-carrier-protein]--UDP-N-acetylglucosamine O-acyltransferase.